Here is a 2097-residue protein sequence, read N- to C-terminus: SCAR-like protein 1 (2097 aa).

Disordered stretches follow at residues 205–227 (IANS…PRTT), 544–565 (AHSS…SIES), 1443–1467 (SQIA…PLSS), 1588–1616 (STEE…DPQK), 1730–1802 (QERV…EKTV), 1820–1842 (ASSH…PVTS), and 1893–1944 (YEGP…EGGY). Positions 549–562 (KQSSQKSSGLDGSS) are enriched in low complexity. Polar residues predominate over residues 1443–1454 (SQIASCSPTPSN). A compositionally biased stretch (polar residues) spans 1766-1794 (SISQQGLQGSVFPSDTSDNGEHSSYTSRA). Positions 1908–1922 (YPHDDHNSEKEDIHQ) are enriched in basic and acidic residues. In terms of domain architecture, WH2 spans 2028–2046 (ERNLLLEQIRNKTFNLKPV).

This sequence belongs to the SCAR/WAVE family.

It localises to the cytoplasm. The protein resides in the cytoskeleton. In terms of biological role, involved in regulation of actin and microtubule organization. Part of a WAVE complex that activates the Arp2/3 complex. The protein is SCAR-like protein 1 of Oryza sativa subsp. japonica (Rice).